We begin with the raw amino-acid sequence, 75 residues long: Protein EGO2 (75 aa).

This is Protein EGO2 from Saccharomyces cerevisiae (strain ATCC 204508 / S288c) (Baker's yeast).